The following is a 687-amino-acid chain: Acetyl-coenzyme A synthetase 2 (687 aa).

CoA contacts are provided by residues 206–209 (RGGK) and threonine 325. Residues 401-403 (GEP), 425-430 (DTMWQT), aspartate 516, and arginine 531 contribute to the ATP site. Serine 539 provides a ligand contact to CoA. An ATP-binding site is contributed by arginine 542. Arginine 617 provides a ligand contact to CoA.

This sequence belongs to the ATP-dependent AMP-binding enzyme family.

It carries out the reaction acetate + ATP + CoA = acetyl-CoA + AMP + diphosphate. In Eremothecium gossypii (strain ATCC 10895 / CBS 109.51 / FGSC 9923 / NRRL Y-1056) (Yeast), this protein is Acetyl-coenzyme A synthetase 2 (ACS2).